The chain runs to 160 residues: 2-C-methyl-D-erythritol 2,4-cyclodiphosphate synthase (160 aa).

A divalent metal cation-binding residues include Asp-11 and His-13. 4-CDP-2-C-methyl-D-erythritol 2-phosphate-binding positions include Asp-11–His-13 and His-37–Ser-38. His-45 contributes to the a divalent metal cation binding site. 4-CDP-2-C-methyl-D-erythritol 2-phosphate is bound by residues Asp-59–Gly-61, Phe-64–Asp-68, Ala-103–Ala-109, Thr-135–Glu-138, Phe-142, and Arg-145.

The protein belongs to the IspF family. Homotrimer. A divalent metal cation is required as a cofactor.

It catalyses the reaction 4-CDP-2-C-methyl-D-erythritol 2-phosphate = 2-C-methyl-D-erythritol 2,4-cyclic diphosphate + CMP. It functions in the pathway isoprenoid biosynthesis; isopentenyl diphosphate biosynthesis via DXP pathway; isopentenyl diphosphate from 1-deoxy-D-xylulose 5-phosphate: step 4/6. Functionally, involved in the biosynthesis of isopentenyl diphosphate (IPP) and dimethylallyl diphosphate (DMAPP), two major building blocks of isoprenoid compounds. Catalyzes the conversion of 4-diphosphocytidyl-2-C-methyl-D-erythritol 2-phosphate (CDP-ME2P) to 2-C-methyl-D-erythritol 2,4-cyclodiphosphate (ME-CPP) with a corresponding release of cytidine 5-monophosphate (CMP). This chain is 2-C-methyl-D-erythritol 2,4-cyclodiphosphate synthase, found in Thioalkalivibrio sulfidiphilus (strain HL-EbGR7).